A 43-amino-acid chain; its full sequence is Cytochrome b559 subunit beta (43 aa).

The helical transmembrane segment at 18–34 (WLAIHGLAIPTVFFLGG) threads the bilayer. H22 is a heme binding site.

This sequence belongs to the PsbE/PsbF family. Heterodimer of an alpha subunit and a beta subunit. PSII is composed of 1 copy each of membrane proteins PsbA, PsbB, PsbC, PsbD, PsbE, PsbF, PsbH, PsbI, PsbJ, PsbK, PsbL, PsbM, PsbT, PsbX, PsbY, PsbZ, Psb30/Ycf12, at least 3 peripheral proteins of the oxygen-evolving complex and a large number of cofactors. It forms dimeric complexes. Heme b serves as cofactor.

The protein resides in the plastid. It is found in the chloroplast thylakoid membrane. Its function is as follows. This b-type cytochrome is tightly associated with the reaction center of photosystem II (PSII). PSII is a light-driven water:plastoquinone oxidoreductase that uses light energy to abstract electrons from H(2)O, generating O(2) and a proton gradient subsequently used for ATP formation. It consists of a core antenna complex that captures photons, and an electron transfer chain that converts photonic excitation into a charge separation. The chain is Cytochrome b559 subunit beta from Trieres chinensis (Marine centric diatom).